Here is a 497-residue protein sequence, read N- to C-terminus: mRNA cleavage and polyadenylation factor CLP1 (497 aa).

Residues 1–20 (MSIPGLGQIAPQQPTTSTTR) are disordered. ATP contacts are provided by residues Glu-29 and 168–173 (DSGKTT).

It belongs to the Clp1 family. Clp1 subfamily. In terms of assembly, component of a pre-mRNA cleavage factor complex. Interacts directly with PCF11.

It is found in the nucleus. Required for endonucleolytic cleavage during polyadenylation-dependent pre-mRNA 3'-end formation. The protein is mRNA cleavage and polyadenylation factor CLP1 of Chaetomium globosum (strain ATCC 6205 / CBS 148.51 / DSM 1962 / NBRC 6347 / NRRL 1970) (Soil fungus).